Consider the following 297-residue polypeptide: HTH-type transcriptional regulator ArgP (297 aa).

One can recognise an HTH lysR-type domain in the interval 4–60; that stretch reads PDYRTLQALDAVIRERGFERAAQKLCITQSAVSQRIKQLENLFGQPLLVRTVPPRPT. Residues 21–40 constitute a DNA-binding region (H-T-H motif); sequence FERAAQKLCITQSAVSQRIK.

This sequence belongs to the LysR transcriptional regulatory family. As to quaternary structure, homodimer.

Controls the transcription of genes involved in arginine and lysine metabolism. The polypeptide is HTH-type transcriptional regulator ArgP (Yersinia enterocolitica serotype O:8 / biotype 1B (strain NCTC 13174 / 8081)).